A 450-amino-acid polypeptide reads, in one-letter code: Sensor histidine kinase EnvZ (450 aa).

The next 2 membrane-spanning stretches (helical) occupy residues 15–35 (TLLL…LVVL) and 159–179 (PLFR…WLFI). The region spanning 180-232 (RIQNRPLVDLEHAALQVGKGIIPPPLREYGASEVRSVTRAFNHMAAGVKQLAD) is the HAMP domain. A cytoplasmic dimerization domain (CDD), when dimerized forms osmosensitive core region spans residues 223–289 (MAAGVKQLAD…IIEQFIDYLR (67 aa)). The Histidine kinase domain occupies 240-440 (GVSHDLRTPL…SIRAWLPVPV (201 aa)). ATP-binding positions include His243, 347–351 (NAARY), Asp373, 392–393 (RG), and 402–406 (TGLGL). His243 carries the phosphohistidine; by autocatalysis modification.

Homodimer. Post-translationally, autophosphorylated.

It is found in the cell inner membrane. It catalyses the reaction ATP + protein L-histidine = ADP + protein N-phospho-L-histidine.. Its function is as follows. Member of the two-component regulatory system EnvZ/OmpR involved in osmoregulation (particularly of genes ompF and ompC) as well as other genes. EnvZ functions as a membrane-associated protein kinase that phosphorylates OmpR in response to environmental signals; at low osmolarity OmpR activates ompF transcription, while at high osmolarity it represses ompF and activates ompC transcription. The protein is Sensor histidine kinase EnvZ (envZ) of Salmonella typhimurium (strain SL1344).